The chain runs to 545 residues: MRCRTRQRISERSQACVVKVSACSYSVCMATNLDELNAQSAYAPLPPIFAKLGLAYDDVLLLPNETDVIPSEVDTSTHLTRKIVMKAPVLSAAMDTVTESEMAIAMARNGGIGVLHRNLSIDDQAAQVDVVKRSESGMITDPLTVNPEVTLADLDKLCGKFHISGLPVVDKENKLVGIITNRDMRFIASEDYDTLKVKDVMTKENLVTGPSNISKDDAHRLLAQHKVEKLPLVDEEGHLTGLITVKDFVKTEQYPDATKDEQGRLRVAAGVGFLGDAWQRASALMEAGVDVLVVDTANGEARLALDMISRLKHDSAFDGVQIIGGNVGTRSGAQAMIEAGADAVKVGIGPGSICTTRIVAGVGVPQLTAVYEAAQACRAAGVPCIADGGIHYSGDIAKALVAGASSVMLGGTLAGCEEAPGEKVLLHGKQYKLYRGMGSLGAMAPRGKKSYSKDRYFQADVTSSDKVVPEGVEGEVPYRGPLNAVLYQMLGGLHQSMFYIGAHNIAEMPERGKFIRITDAGLRESHPHDIVMTTEAPNYSGFHNN.

CBS domains lie at 138 to 194 (MITD…DYDT) and 201 to 258 (MTKE…PDAT). NAD(+)-binding positions include D295 and 347–349 (GIG). Residues G349 and G351 each coordinate K(+). S352 provides a ligand contact to IMP. Residue C354 coordinates K(+). Catalysis depends on C354, which acts as the Thioimidate intermediate. IMP-binding positions include 387-389 (DGG), 410-411 (GG), and 434-438 (YRGMG). Catalysis depends on R455, which acts as the Proton acceptor. IMP is bound at residue E470. Residues E524, S525, and H526 each coordinate K(+).

The protein belongs to the IMPDH/GMPR family. Homotetramer. The cofactor is K(+).

It carries out the reaction IMP + NAD(+) + H2O = XMP + NADH + H(+). The protein operates within purine metabolism; XMP biosynthesis via de novo pathway; XMP from IMP: step 1/1. Mycophenolic acid (MPA) is a non-competitive inhibitor that prevents formation of the closed enzyme conformation by binding to the same site as the amobile flap. In contrast, mizoribine monophosphate (MZP) is a competitive inhibitor that induces the closed conformation. MPA is a potent inhibitor of mammalian IMPDHs but a poor inhibitor of the bacterial enzymes. MZP is a more potent inhibitor of bacterial IMPDH. Catalyzes the conversion of inosine 5'-phosphate (IMP) to xanthosine 5'-phosphate (XMP), the first committed and rate-limiting step in the de novo synthesis of guanine nucleotides, and therefore plays an important role in the regulation of cell growth. This chain is Inosine-5'-monophosphate dehydrogenase, found in Bifidobacterium longum (strain NCC 2705).